The sequence spans 731 residues: MNADIDLFSYLNPEKQDLSALAPKDLSREQAVIELERLAKLISHYDHLYHDKDNPAVPDSEYDALVLRNRRIEQFFPDLIRPDSPSKKVGSRPNSRLPKIAHRAAMLSLDNGFLDQDVEDFLGRVRRFFNLKENQAVICTVEPKIDGLSCSLRYEKGILTQAVTRGDGVIGEDVTPNVRVIDDIPKTLKGDNWPEIIEIRGEVYMAKSDFAALNARQTEENKKLFANPRNAAAGSLRQLDPNITARRSLRFLAHGWGEATSLPADTQYGMMKVIESYGLSVSNLLARADDIGQMLDFYQKIEAERADLDFDIDGVVYKLDQLDWQQRFGFSARAPRFALAHKFPAEKAQTTLLDIEIQVGRTGVLTPVAKLEPVTVGGVVVSSATLHNSDEIERLGVRPGDRVLVQRAGDVIPQIVENLTPDVDRPIWRFPHRCPVCDSVARREEGEVAWRCTGGLICPAQRVERLCHFVSRTAFEIEGLGKSHIESFFADKLIETPADIFRLFQKRQLLIEREGWGELSVDNLISAIDKRRKVPFDRFLFALGIRHVGAVTARDLAKSYQTWDNFKAAIDEAAHLRTILQPSSEESEEKYQKRVDKELISFFHIPNMGGKIIRSLLDFFAETHNSDVVSDLLQEVQIEPLYFELASSPLSGKIIVFTGSLQKITRDEAKRQAENLGAKVASSVSKKTNLVVAGEAAGSKLSKAKELDISIIDEDRWHRIVENDGQDSIKI.

NAD(+) is bound by residues 59 to 63 (DSEYD), 108 to 109 (SL), and Glu-142. The N6-AMP-lysine intermediate role is filled by Lys-144. NAD(+) contacts are provided by Arg-165, Glu-202, Lys-318, and Lys-342. Cys-434, Cys-437, Cys-452, and Cys-458 together coordinate Zn(2+). The BRCT domain maps to 645 to 731 (LASSPLSGKI…ENDGQDSIKI (87 aa)).

Belongs to the NAD-dependent DNA ligase family. LigA subfamily. Mg(2+) serves as cofactor. Mn(2+) is required as a cofactor.

It catalyses the reaction NAD(+) + (deoxyribonucleotide)n-3'-hydroxyl + 5'-phospho-(deoxyribonucleotide)m = (deoxyribonucleotide)n+m + AMP + beta-nicotinamide D-nucleotide.. Its function is as follows. DNA ligase that catalyzes the formation of phosphodiester linkages between 5'-phosphoryl and 3'-hydroxyl groups in double-stranded DNA using NAD as a coenzyme and as the energy source for the reaction. It is essential for DNA replication and repair of damaged DNA. The chain is DNA ligase from Zymomonas mobilis subsp. mobilis (strain ATCC 31821 / ZM4 / CP4).